A 475-amino-acid chain; its full sequence is Aspartyl/glutamyl-tRNA(Asn/Gln) amidotransferase subunit B (475 aa).

Belongs to the GatB/GatE family. GatB subfamily. As to quaternary structure, heterotrimer of A, B and C subunits.

It carries out the reaction L-glutamyl-tRNA(Gln) + L-glutamine + ATP + H2O = L-glutaminyl-tRNA(Gln) + L-glutamate + ADP + phosphate + H(+). The catalysed reaction is L-aspartyl-tRNA(Asn) + L-glutamine + ATP + H2O = L-asparaginyl-tRNA(Asn) + L-glutamate + ADP + phosphate + 2 H(+). Functionally, allows the formation of correctly charged Asn-tRNA(Asn) or Gln-tRNA(Gln) through the transamidation of misacylated Asp-tRNA(Asn) or Glu-tRNA(Gln) in organisms which lack either or both of asparaginyl-tRNA or glutaminyl-tRNA synthetases. The reaction takes place in the presence of glutamine and ATP through an activated phospho-Asp-tRNA(Asn) or phospho-Glu-tRNA(Gln). The protein is Aspartyl/glutamyl-tRNA(Asn/Gln) amidotransferase subunit B of Pediococcus pentosaceus (strain ATCC 25745 / CCUG 21536 / LMG 10740 / 183-1w).